The chain runs to 453 residues: Gastrin/cholecystokinin type B receptor (453 aa).

At 1-57 (MELLKLNRSAQGSGAGPGASLCRAGGALLNSSGAGNLSCEPPRLRGAGTRELELAIR) the chain is on the extracellular side. N-linked (GlcNAc...) asparagine glycans are attached at residues Asn7, Asn30, and Asn36. A helical transmembrane segment spans residues 58–79 (VTLYAVIFLMSVGGNVLIIVVL). The Cytoplasmic portion of the chain corresponds to 80–87 (GLSRRLRT). A helical membrane pass occupies residues 88 to 109 (VTNAFLLSLAVSDLLLAVACMP). Residues 110 to 131 (FTLLPNLMGTFIFGTVVCKAVS) are Extracellular-facing. Residues Cys127 and Cys206 are joined by a disulfide bond. A helical transmembrane segment spans residues 132-150 (YLMGVSVSVSTLSLVAIAL). The Cytoplasmic segment spans residues 151–170 (ERYSAICRPLQARVWQTRSH). The chain crosses the membrane as a helical span at residues 171–189 (AARVIIATWMLSGLLMVPY). The Extracellular segment spans residues 190-220 (PVYTAVQPAGGARALQCVHRWPSARVRQTWS). The chain crosses the membrane as a helical span at residues 221–243 (VLLLLLLFFVPGVVMAVAYGLIS). Topologically, residues 244 to 339 (RELYLGLRFD…KLLAKKRVVR (96 aa)) are cytoplasmic. Positions 258–286 (SESRVRSQGGLRGGAGPGPAPPNGSCRPE) are disordered. A helical membrane pass occupies residues 340 to 361 (MLLVIVVLFFLCWLPLYSANTW). Over 362-379 (RAFDSSGAHRALSGAPIS) the chain is Extracellular. The helical transmembrane segment at 380-400 (FIHLLSYASACVNPLVYCFMH) threads the bilayer. Over 401-453 (RRFRQACLETCARCCPRPPRARPRPLPDEDPPTPSIASLSRLSYTTISTLGPG) the chain is Cytoplasmic. Residue Cys414 is the site of S-palmitoyl cysteine attachment. The disordered stretch occupies residues 422–453 (RPRPLPDEDPPTPSIASLSRLSYTTISTLGPG). Over residues 435–453 (SIASLSRLSYTTISTLGPG) the composition is skewed to polar residues.

It belongs to the G-protein coupled receptor 1 family. As to expression, parietal cells, pancreas, brain and various neoplastic tissues.

The protein localises to the cell membrane. Functionally, receptor for gastrin and cholecystokinin. The CCK-B receptors occur throughout the central nervous system where they modulate anxiety, analgesia, arousal, and neuroleptic activity. This receptor mediates its action by association with G proteins that activate a phosphatidylinositol-calcium second messenger system. In Canis lupus familiaris (Dog), this protein is Gastrin/cholecystokinin type B receptor (CCKBR).